The chain runs to 303 residues: D-alanine--D-alanine ligase (303 aa).

An ATP-grasp domain is found at 99–293 (TYRFLKDIVE…FEELVEIILK (195 aa)). Residue 125 to 176 (GYPCVVKPRREGSSIGVFICESDEEFQHALKEDLPRYGSVIVQKYIPGREMT) participates in ATP binding. The Mg(2+) site is built by Asp-248, Glu-260, and Asn-262.

The protein belongs to the D-alanine--D-alanine ligase family. It depends on Mg(2+) as a cofactor. The cofactor is Mn(2+).

Its subcellular location is the cytoplasm. The enzyme catalyses 2 D-alanine + ATP = D-alanyl-D-alanine + ADP + phosphate + H(+). It participates in cell wall biogenesis; peptidoglycan biosynthesis. Its function is as follows. Cell wall formation. This Thermotoga petrophila (strain ATCC BAA-488 / DSM 13995 / JCM 10881 / RKU-1) protein is D-alanine--D-alanine ligase.